The following is a 218-amino-acid chain: Small ribosomal subunit protein uS3c (218 aa).

Residues 47-118 (VQKNMKTSSG…KLNIAITRIE (72 aa)) form the KH type-2 domain.

This sequence belongs to the universal ribosomal protein uS3 family. As to quaternary structure, part of the 30S ribosomal subunit.

It is found in the plastid. The protein resides in the chloroplast. The chain is Small ribosomal subunit protein uS3c (rps3) from Helianthus annuus (Common sunflower).